The primary structure comprises 341 residues: Probable long-chain-alcohol O-fatty-acyltransferase 9 (341 aa).

7 helical membrane passes run 9–29 (IIVW…SANI), 36–56 (LFSV…FSSV), 82–102 (GPLF…CFPI), 122–142 (FAIK…SHFL), 146–166 (VLLS…LGPL), 231–251 (MGYL…YFYI), and 295–315 (RLLT…PLFI).

Belongs to the wax synthase family.

The protein resides in the membrane. It carries out the reaction a long chain fatty alcohol + a fatty acyl-CoA = a wax ester + CoA. Its function is as follows. Catalyzes the final step in the synthesis of long-chain linear esters (waxes). The sequence is that of Probable long-chain-alcohol O-fatty-acyltransferase 9 from Arabidopsis thaliana (Mouse-ear cress).